Consider the following 46-residue polypeptide: Small, acid-soluble spore protein N (46 aa).

Residues 1–46 (MAKMKHGSAQFRPDHLGTQPRKSDANKGKKMNTKGNENPQYIPPKG) are disordered.

The protein belongs to the SspN family.

It is found in the spore core. The sequence is that of Small, acid-soluble spore protein N from Halalkalibacterium halodurans (strain ATCC BAA-125 / DSM 18197 / FERM 7344 / JCM 9153 / C-125) (Bacillus halodurans).